Reading from the N-terminus, the 383-residue chain is Vesicle-associated membrane protein-associated protein scs2 (383 aa).

One can recognise an MSP domain in the interval 1 to 123; sequence MSVECSGELF…SIFDRKIRCV (123 aa). At 1-362 the chain is on the cytoplasmic side; sequence MSVECSGELF…TGASLTESPG (362 aa). Residues 127–146 show a composition bias toward polar residues; the sequence is KQPPQSADKQVENTSTSNPP. Disordered stretches follow at residues 127–160 and 233–359; these read KQPPQSADKQVENTSTSNPPVSVEGSENLASSVG and ESAS…SLTE. Residues S236, S237, S259, S261, and S268 each carry the phosphoserine modification. Positions 241–263 are enriched in basic and acidic residues; that stretch reads DVARSKVQDIIDNEIPKPSESPR. The segment covering 289–300 has biased composition (basic and acidic residues); it reads FDTKKNDFDSKL. Residues 347 to 359 show a composition bias toward polar residues; that stretch reads ADPSSSTGASLTE. Residues 363-383 form a helical; Anchor for type IV membrane protein membrane-spanning segment; the sequence is IPPNIVIILCLIFFLIGYLFF.

Belongs to the VAMP-associated protein (VAP) (TC 9.B.17) family. In terms of assembly, interacts (via MSP domain) with duc1 (via FFAT-motif); the interaction is direct and serves to restrict the localization of duc1 to areas of cell membrane-endoplasmic reticulum contact sites, and away from the cell division site. Interacts with epr1.

It is found in the endoplasmic reticulum membrane. In terms of biological role, vesicle-associated membrane protein-associated protein (VAP) implicated in maintaining the cortical endoplasmic reticulum (ER)-plasma membrane (PM) attachment. ER-PM contacts function to modulate the distribution of contractile ring components to ensure robust ring assembly. ER-PM contacts function also in controlling exocytosis and maintenance of cell polarity regulating cell shape. VAPs play an important role in regulating eisosome assembly. VAPs also contribute to ER-phagy by tethering atg8 to the ER membrane, but also by maintaining the ER-plasma membrane contact. Restricts the localization of duc1 away from the site of cell division. The polypeptide is Vesicle-associated membrane protein-associated protein scs2 (scs2) (Schizosaccharomyces pombe (strain 972 / ATCC 24843) (Fission yeast)).